Consider the following 295-residue polypeptide: UDP-N-acetylenolpyruvoylglucosamine reductase (295 aa).

The region spanning 23–188 (KVGGPADFLA…ISAKFALKPG (166 aa)) is the FAD-binding PCMH-type domain. The active site involves Arg167. Ser217 functions as the Proton donor in the catalytic mechanism. The active site involves Glu287.

Belongs to the MurB family. The cofactor is FAD.

The protein localises to the cytoplasm. It carries out the reaction UDP-N-acetyl-alpha-D-muramate + NADP(+) = UDP-N-acetyl-3-O-(1-carboxyvinyl)-alpha-D-glucosamine + NADPH + H(+). It participates in cell wall biogenesis; peptidoglycan biosynthesis. Cell wall formation. This chain is UDP-N-acetylenolpyruvoylglucosamine reductase, found in Streptococcus pyogenes serotype M1.